We begin with the raw amino-acid sequence, 235 residues long: Glycerol-3-phosphate acyltransferase (235 aa).

Transmembrane regions (helical) follow at residues 4 to 24, 56 to 76, 94 to 114, 125 to 145, 152 to 172, and 191 to 211; these read LLAI…IMAG, SVTL…VAFF, LLAG…GFKG, LIGI…LTVW, VASI…KYVF, and FHDS…LAIL.

It belongs to the PlsY family. In terms of assembly, probably interacts with PlsX.

Its subcellular location is the cell inner membrane. The enzyme catalyses an acyl phosphate + sn-glycerol 3-phosphate = a 1-acyl-sn-glycero-3-phosphate + phosphate. Its pathway is lipid metabolism; phospholipid metabolism. In terms of biological role, catalyzes the transfer of an acyl group from acyl-phosphate (acyl-PO(4)) to glycerol-3-phosphate (G3P) to form lysophosphatidic acid (LPA). This enzyme utilizes acyl-phosphate as fatty acyl donor, but not acyl-CoA or acyl-ACP. This chain is Glycerol-3-phosphate acyltransferase, found in Chlorobium luteolum (strain DSM 273 / BCRC 81028 / 2530) (Pelodictyon luteolum).